The sequence spans 207 residues: Small ribosomal subunit protein uS3 (207 aa).

Positions 17 to 86 (IDEYLEKELR…NPQIEVEEIK (70 aa)) constitute a KH type-2 domain.

This sequence belongs to the universal ribosomal protein uS3 family. Part of the 30S ribosomal subunit.

In terms of biological role, binds the lower part of the 30S subunit head. The chain is Small ribosomal subunit protein uS3 from Thermococcus sibiricus (strain DSM 12597 / MM 739).